Here is a 338-residue protein sequence, read N- to C-terminus: Glutamyl-tRNA reductase (338 aa).

Substrate-binding positions include 50–53, Ser102, 107–109, and Gln113; these read TCHR and ETE. The Nucleophile role is filled by Cys51. 181 to 186 contributes to the NADP(+) binding site; sequence GYSDIN.

Belongs to the glutamyl-tRNA reductase family. Homodimer.

It catalyses the reaction (S)-4-amino-5-oxopentanoate + tRNA(Glu) + NADP(+) = L-glutamyl-tRNA(Glu) + NADPH + H(+). Its pathway is porphyrin-containing compound metabolism; protoporphyrin-IX biosynthesis; 5-aminolevulinate from L-glutamyl-tRNA(Glu): step 1/2. In terms of biological role, catalyzes the NADPH-dependent reduction of glutamyl-tRNA(Glu) to glutamate 1-semialdehyde (GSA). This chain is Glutamyl-tRNA reductase, found in Chlamydia caviae (strain ATCC VR-813 / DSM 19441 / 03DC25 / GPIC) (Chlamydophila caviae).